Reading from the N-terminus, the 228-residue chain is Large ribosomal subunit protein uL23m (228 aa).

Positions 194–228 are disordered; it reads PEEEGWSEVEENLPLDESAESAAEESSSKGSETRQ. The segment covering 195–216 has biased composition (acidic residues); sequence EEEGWSEVEENLPLDESAESAA.

The protein belongs to the universal ribosomal protein uL23 family. Component of the mitochondrial large ribosomal subunit (mt-LSU). Mature N.crassa 74S mitochondrial ribosomes consist of a small (37S) and a large (54S) subunit. The 37S small subunit contains a 16S ribosomal RNA (16S mt-rRNA) and 32 different proteins. The 54S large subunit contains a 23S rRNA (23S mt-rRNA) and 42 different proteins. uL23m forms the wall of the exit tunnel.

The protein resides in the mitochondrion. Its function is as follows. Component of the mitochondrial ribosome (mitoribosome), a dedicated translation machinery responsible for the synthesis of mitochondrial genome-encoded proteins, including at least some of the essential transmembrane subunits of the mitochondrial respiratory chain. The mitoribosomes are attached to the mitochondrial inner membrane and translation products are cotranslationally integrated into the membrane. The protein is Large ribosomal subunit protein uL23m (mrp20) of Neurospora crassa (strain ATCC 24698 / 74-OR23-1A / CBS 708.71 / DSM 1257 / FGSC 987).